Here is a 661-residue protein sequence, read N- to C-terminus: MFRTPHTLQFCSVHYKTFIDAIHALQSRISQKVLCRSCSSRVSGPAKKYDVDPSQFPQENIRNFCIVAHVDHGKSTLSDRLLEFTDTIRTSKDNQQVLDRLPVERERGITVKAQTVSMVYHRPGHESPFLLNLIDTPGHVDFSYEVLRSVAVCQGVILLVDANQGVQAQTVANFNMAFCSDLTILPVLNKVDLKNADVEGVTSQMENLFGTRREDVLKVSAKLGTGVEELIEAIIDRIPSPKGDADAKFRGFLLDSWYDRYRGVIALLMAVDGTLRLGDEIISHMTGTSYTVRDLGFLNPLETPTAMLCAGQAGYVVANMRSPKEAHVGDTLSHKSADIKPLPKLEESKPMVFAGIYPEDQSQNNELRSAIDRLLLNDPSVQVSIESNPALGQGWRLGFLGLLHMDVFCQRLDQEFDAQVVVTAPSVSYKVKVHGAKNIKKYGGEMVTVNNPLHLPDRSIIREYYEPMAFGTIITPGTYLRDVTSLCVDRRGVPKSTQDVDDNTILLQYKFPLNEIIVDFYDELKSITSGYASFDYEETGYEESSLVQMQILINGKVVEELTTIVHTTRAQRVGRSMLLKLKECIPQQLYAVALQAAVGAKVLAREDIRALKKNVLAKCYGGDITRKVKLLKRHSEKQKKLRLIGNVEVPRDAFIKVLKRT.

Residues 59–242 (ENIRNFCIVA…AIIDRIPSPK (184 aa)) form the tr-type G domain. Residues 68–75 (AHVDHGKS), 135–139 (DTPGH), and 189–192 (NKVD) contribute to the GTP site.

The protein belongs to the TRAFAC class translation factor GTPase superfamily. Classic translation factor GTPase family. LepA subfamily.

The protein localises to the mitochondrion inner membrane. It carries out the reaction GTP + H2O = GDP + phosphate + H(+). Functionally, promotes mitochondrial protein synthesis. May act as a fidelity factor of the translation reaction, by catalyzing a one-codon backward translocation of tRNAs on improperly translocated ribosomes. Binds to mitochondrial ribosomes in a GTP-dependent manner. This chain is Translation factor GUF1 homolog, mitochondrial, found in Ixodes scapularis (Black-legged tick).